The chain runs to 350 residues: MARIQTVLGSITPNLLGRTLTHEHVAMDFEHFYKPPPADFQSELEQKISMATLGYVRLYPYSSKENVRFYDEEALEASRKDVLLYKKHGGGAIVENSSYGLKRNLEFIVDLAKTTGVHFIAGTGHYIHATQDASHKNLTVEQMTDLYSKDILTGIEVNGRMVKSGFIGEVASVYPVQEFERHSLLAAGEIQEVLGCGVSLHPHRVSKAPFEILRLYLEAGGRANKCVMSHLDRTLFDMDELLEFAKMGCYLQYDLFGTECSYYQLNSAVDMISDGQRIDNIIKLINEGLVDRLLMSHDIHTKHRLTSYGGHGYHHIHMNILPRMFQRGVTLDQVEQMTVTNPANWLSFSA.

A divalent metal cation-binding residues include histidine 22, histidine 24, glutamate 169, histidine 201, histidine 230, and aspartate 298.

It belongs to the metallo-dependent hydrolases superfamily. Phosphotriesterase family. A divalent metal cation serves as cofactor.

This Drosophila grimshawi (Hawaiian fruit fly) protein is Phosphotriesterase-related protein.